Consider the following 653-residue polypeptide: Calpain-10 (653 aa).

The 309-residue stretch at L13–I321 folds into the Calpain catalytic domain. Catalysis depends on residues C73, H238, and N263. Domain III regions lie at residues T322 to S494 and E513 to Q653.

Belongs to the peptidase C2 family.

In terms of biological role, calcium-regulated non-lysosomal thiol-protease which catalyzes limited proteolysis of substrates involved in cytoskeletal remodeling and signal transduction. May play a role in insulin-stimulated glucose uptake. This Macaca fascicularis (Crab-eating macaque) protein is Calpain-10 (CAPN10).